The primary structure comprises 480 residues: UDP-N-acetylmuramate--L-alanine ligase (480 aa).

126-132 (GTHGKTT) is a binding site for ATP.

This sequence belongs to the MurCDEF family.

The protein resides in the cytoplasm. It catalyses the reaction UDP-N-acetyl-alpha-D-muramate + L-alanine + ATP = UDP-N-acetyl-alpha-D-muramoyl-L-alanine + ADP + phosphate + H(+). It participates in cell wall biogenesis; peptidoglycan biosynthesis. In terms of biological role, cell wall formation. This is UDP-N-acetylmuramate--L-alanine ligase from Blochmanniella pennsylvanica (strain BPEN).